A 290-amino-acid chain; its full sequence is MITFSELLLKLQDFWAKQGCTIVQPYDFPSGAGTFHPATFLKSLDSKPWATAYVAPSRRPTDGRYGENPNRLGAYYQFQVLIKPSPDNIQDLYLKSLEALGLDWRKHDIRFVEDNWESPTLGAWGLGWEVWLDGMEVTQFTYFQQVGGFECDPVAVEITYGTERLAMYLQEVESVFDIVWSKNGGHIVTYADVHKRGEFEYSRYNFEVADTKMLFDWFEDASRECKRCLEEKLPLPAYDYCLLASHIFNTLDARKAISVTERQNFILKVRELAKGCAEVYKESLGELSEA.

The protein belongs to the class-II aminoacyl-tRNA synthetase family. In terms of assembly, tetramer of two alpha and two beta subunits.

Its subcellular location is the cytoplasm. It catalyses the reaction tRNA(Gly) + glycine + ATP = glycyl-tRNA(Gly) + AMP + diphosphate. The chain is Glycine--tRNA ligase alpha subunit from Nitratiruptor sp. (strain SB155-2).